We begin with the raw amino-acid sequence, 567 residues long: PCNA-interacting partner (567 aa).

The disordered stretch occupies residues 485-552 (IDLKTAEQVK…GVSRNKASKN (68 aa)). 2 stretches are compositionally biased toward polar residues: residues 512–524 (DIQS…QENE) and 534–552 (LTSS…ASKN).

It belongs to the PARI family.

It localises to the cytoplasm. It is found in the nucleus. In terms of biological role, required to suppress inappropriate homologous recombination, thereby playing a central role DNA repair and in the maintenance of genomic stability. The polypeptide is PCNA-interacting partner (parpbp) (Xenopus laevis (African clawed frog)).